A 182-amino-acid polypeptide reads, in one-letter code: Prorelaxin (182 aa).

The signal sequence occupies residues 1 to 25 (MRRLFLSHVLGAWLLLSQLPRELSG). Gln-26 carries the post-translational modification Pyrrolidone carboxylic acid. Cystine bridges form between Cys-35–Cys-169, Cys-47–Cys-182, and Cys-168–Cys-173. The propeptide at 54–156 (KTVLRLEEPG…LKNLGLDKHS (103 aa)) is connecting peptide. Positions 161–162 (MI) are excised as a propeptide. The residue at position 163 (Gln-163) is a Pyrrolidone carboxylic acid.

Belongs to the insulin family. As to quaternary structure, heterodimer of a B chain and an A chain linked by two disulfide bonds.

It localises to the secreted. In terms of biological role, relaxin is an ovarian hormone that acts with estrogen to produce dilatation of the birth canal in many mammals. The sequence is that of Prorelaxin (RLN) from Equus caballus (Horse).